Here is a 950-residue protein sequence, read N- to C-terminus: Sodium/calcium exchanger Calx (950 aa).

A signal peptide spans 1–22 (MQLLLKSIFTCALFVIFVYATA). Topologically, residues 23 to 120 (QSLLKVQETE…PQRNISVGDR (98 aa)) are extracellular. Asn39, Asn47, and Asn114 each carry an N-linked (GlcNAc...) asparagine glycan. A helical transmembrane segment spans residues 121 to 141 (LVRGFVYFVLLIYLFVGVSII). The Cytoplasmic segment spans residues 142 to 179 (ADRFMAAIEAITSIERAVVVKGPNNTKQVMHVRIWNET). Residues 180–200 (VANLTLMALGSSAPEILLSVI) form a helical membrane-spanning segment. Residues 201-216 (EIYAKDFESGDLGPGT) lie on the Extracellular side of the membrane. The chain crosses the membrane as a helical span at residues 217–237 (IVGSAAYNLFMIIAVCMIWIP). Residues 238–257 (AGEVRRIRHLRVFFVTALFS) are Cytoplasmic-facing. 2 helical membrane passes run 258-278 (VFAY…VILV) and 279-299 (WEAI…YIAE). Residues 300-749 (RRLLVYKYMD…NDDEEEEVPS (450 aa)) are Cytoplasmic-facing. The interval 301–318 (RLLVYKYMDKNYRVNKRG) is corresponds to the exchanger inhibitory peptide (XIP) found in other sodium/calcium exchange proteins and thought to be involved in calmodulin binding. Positions 440 to 551 (DPIRMYFEPG…MIATVMILDD (112 aa)) constitute a Calx-beta 1 domain. Glu455, Asp490, Asp515, Asp516, Val518, Glu520, Glu523, Asp550, Asp551, and Asp552 together coordinate Ca(2+). The Calx-beta 2 domain maps to 555–694 (GIFAFTDSVF…LTTAYVRIRE (140 aa)). The chain crosses the membrane as a helical span at residues 750–770 (CFSYVSHFVCLFWKVLFAFVP). The Extracellular segment spans residues 771–775 (PTDIC). Residues 776–796 (GGYVTFVVSIFVIGVITAIIG) traverse the membrane as a helical segment. Topologically, residues 797–813 (DAASYFGCALNIKDSVT) are cytoplasmic. The chain crosses the membrane as a helical span at residues 814–834 (AILFVALGTSIPDTFASMIAA). The Extracellular portion of the chain corresponds to 835–848 (KHDEGADNCIGNVT). Residue Asn846 is glycosylated (N-linked (GlcNAc...) asparagine). Residues 849 to 869 (GSNAVNVFLGIGLAWTIAAVY) form a helical membrane-spanning segment. Residues 870–883 (HSSHGMTFNVEPGT) lie on the Cytoplasmic side of the membrane. Residues 884–904 (IGFAVALFCGEALIAIMLIMF) traverse the membrane as a helical segment. Over 905 to 923 (RRWHKGIGAELGGPKVSKY) the chain is Extracellular. The chain crosses the membrane as a helical span at residues 924 to 944 (ISAAILVFLWVFYVVICILEA). The Cytoplasmic portion of the chain corresponds to 945-950 (YDVIRV).

It belongs to the Ca(2+):cation antiporter (CaCA) (TC 2.A.19) family. SLC8 subfamily. In terms of tissue distribution, ubiquitously expressed with higher expression in head compared to body (at protein level). Enriched in photoreceptor cells of the eye (at protein level). In the adult head, expressed in retina, optic ganglia and all neuronal tissues.

The protein resides in the cell membrane. It localises to the cell projection. It is found in the rhabdomere membrane. The catalysed reaction is Ca(2+)(in) + 3 Na(+)(out) = Ca(2+)(out) + 3 Na(+)(in). Its activity is regulated as follows. Activated by a Na(+) electrochemical gradient but also undergoes Na(2+)-dependent inactivation. Inhibited by micromolar levels of cytoplasmic Ca(2+), which is the opposite of most characterized mammalian homologs. Exhibits greater extent of inhibition by Ca(2+) than isoform D/1.2. With respect to regulation, exhibits greater Na(2+)-dependent inactivation than isoform A/1.1, probably due to greater stability of the inactive Na(2+)-bound form. Na(+)/Ca(2+) antiporter that couples the energy of a Na(+) electrochemical gradient to the movement of Ca(2+) against an electrochemical gradient across a membrane, which contributes to the regulation of cytoplasmic Ca(2+) levels. Mediates Na(+)/Ca(2+) exchange in photoreceptor cells and involved in controlling Ca(2+) levels during phototransduction, affecting magnitude of the photoresponse, activation kinetics, signal amplification, response termination, and light adaptation. Light induced depolarization of photoreceptor cells, resulting in Na(+) and Ca(2+) entry through trp/transient receptor potential protein channels, is essential for photoreceptor cell function but may result in toxic levels of cytoplasmic Ca(2+). Na(+)/Ca(2+) antiporter regulation of Ca(2+) levels protects photoreceptor cells from light-dependent retinal degeneration. The chain is Sodium/calcium exchanger Calx from Drosophila melanogaster (Fruit fly).